The chain runs to 253 residues: Tryptophan synthase alpha chain (253 aa).

Active-site proton acceptor residues include Glu47 and Asp58.

It belongs to the TrpA family. As to quaternary structure, tetramer of two alpha and two beta chains.

The catalysed reaction is (1S,2R)-1-C-(indol-3-yl)glycerol 3-phosphate + L-serine = D-glyceraldehyde 3-phosphate + L-tryptophan + H2O. Its pathway is amino-acid biosynthesis; L-tryptophan biosynthesis; L-tryptophan from chorismate: step 5/5. Functionally, the alpha subunit is responsible for the aldol cleavage of indoleglycerol phosphate to indole and glyceraldehyde 3-phosphate. This Lactococcus lactis subsp. lactis (strain IL1403) (Streptococcus lactis) protein is Tryptophan synthase alpha chain.